A 95-amino-acid chain; its full sequence is Protein TusB (95 aa).

This sequence belongs to the DsrH/TusB family. In terms of assembly, heterohexamer, formed by a dimer of trimers. The hexameric TusBCD complex contains 2 copies each of TusB, TusC and TusD. The TusBCD complex interacts with TusE.

The protein localises to the cytoplasm. Part of a sulfur-relay system required for 2-thiolation of 5-methylaminomethyl-2-thiouridine (mnm(5)s(2)U) at tRNA wobble positions. In Shigella dysenteriae serotype 1 (strain Sd197), this protein is Protein TusB.